Consider the following 138-residue polypeptide: MAKPIPRIGSRRNGRISSRKSTRRIPKGVIHVQASFNNTIVTVTDVRGRVISWSSAGTCGFKGTRRGTPFAAQTAAGNAIRGVVDQGMQRAEVMIKGPGLGRDAALRAIRRSGILLSFIRDVTPMPHNGCRPPKKRRV.

The interval 1-23 (MAKPIPRIGSRRNGRISSRKSTR) is disordered. Positions 9-23 (GSRRNGRISSRKSTR) are enriched in basic residues.

Belongs to the universal ribosomal protein uS11 family. Part of the 30S ribosomal subunit.

The protein resides in the plastid. The protein localises to the chloroplast. This is Small ribosomal subunit protein uS11c from Cucumis sativus (Cucumber).